Consider the following 373-residue polypeptide: MKSGRYIGVMSGTSLDGVDVVLAAIDGRMVAQQASYSHPMPLQLKQDILGMCQGQQTTLSAVGRLDAQLGTLFGEAVLGLLKQTGVAAHDITAIGCHGQTVWHEPEGDARFSMQLGDNNRIAALTNITTVGDFRRRDMAYGGQGAPLVPAFHQALLSHPVERRMVLNIGGIANLSMLLPGAAVRGFDTGPGNMLMDAWIWRHQSQPYDKDGGWAMAGRVCLPLLQQMLADPYFSLPAPKSTGREYFNAAWLERQLAGLAAVSPVDVQTTLTELTAVTICEQVQLAGGCERLLVCGGGARNMLLMARMSALLPGTEVCLTDDFGISGDDMEALAFAWLAFRTLSGQPGNLPSVTGASCETLLGGIYPVLPLGGR.

12-19 (GTSLDGVD) contributes to the ATP binding site.

It belongs to the anhydro-N-acetylmuramic acid kinase family.

It carries out the reaction 1,6-anhydro-N-acetyl-beta-muramate + ATP + H2O = N-acetyl-D-muramate 6-phosphate + ADP + H(+). It participates in amino-sugar metabolism; 1,6-anhydro-N-acetylmuramate degradation. It functions in the pathway cell wall biogenesis; peptidoglycan recycling. In terms of biological role, catalyzes the specific phosphorylation of 1,6-anhydro-N-acetylmuramic acid (anhMurNAc) with the simultaneous cleavage of the 1,6-anhydro ring, generating MurNAc-6-P. Is required for the utilization of anhMurNAc either imported from the medium or derived from its own cell wall murein, and thus plays a role in cell wall recycling. The chain is Anhydro-N-acetylmuramic acid kinase from Serratia proteamaculans (strain 568).